Reading from the N-terminus, the 86-residue chain is Photosystem I reaction center subunit PsaK 1 (86 aa).

2 helical membrane passes run 14–34 (LSWSPKVAGVMIACNILAIAF) and 61–81 (AVLGTASFGHILGAGVILGLA).

It belongs to the PsaG/PsaK family.

It localises to the cellular thylakoid membrane. This is Photosystem I reaction center subunit PsaK 1 (psaK1) from Synechocystis sp. (strain ATCC 27184 / PCC 6803 / Kazusa).